An 876-amino-acid polypeptide reads, in one-letter code: AP-1 complex subunit gamma-1 (876 aa).

HEAT repeat units follow at residues 97 to 135 (DERQ…ICSA), 136 to 173 (EMAR…KVPD), 248 to 284 (FLHI…KTES), 308 to 345 (SLRV…FDDQ), 346 to 382 (AVQR…ENNV), 384 to 417 (QLTK…KFSP), 418 to 454 (EKLW…NASE), 506 to 545 (VTES…RFPS), and 560 to 599 (SLLL…ATFN). The GAE domain maps to 756–873 (PAYAPIVAYE…LEEGQVSNFP (118 aa)).

Belongs to the adaptor complexes large subunit family. In terms of assembly, adaptor protein complex 1 (AP-1) is a heterotetramer composed of two large adaptins (gamma-type subunit and beta-type subunit), a medium adaptin (mu-type subunit) and a small adaptin (sigma-type subunit). Binds to EPSIN1. Interacts with DRP2A/ADL6 (via C-terminus).

Its subcellular location is the golgi apparatus. The protein resides in the cytoplasmic vesicle. It is found in the clathrin-coated vesicle membrane. Functionally, subunit of clathrin-associated adaptor protein complex 1 that plays a role in protein sorting at the trans-Golgi network and early endosomes (TGN/EE). The AP complexes mediate both the recruitment of clathrin to membranes and the recognition of sorting signals within the cytosolic tails of transmembrane cargo molecules. The sequence is that of AP-1 complex subunit gamma-1 (GAMMA-ADR) from Arabidopsis thaliana (Mouse-ear cress).